A 1032-amino-acid polypeptide reads, in one-letter code: Leucine-rich repeat and coiled-coil domain-containing protein 1 (1032 aa).

LRR repeat units lie at residues threonine 44 to tryptophan 65, asparagine 66 to threonine 87, lysine 88 to isoleucine 109, asparagine 110 to histidine 131, and lysine 136 to methionine 157. An LRRCT domain is found at asparagine 175–glutamine 218. The disordered stretch occupies residues aspartate 316–arginine 345. A compositionally biased stretch (basic and acidic residues) spans valine 318–aspartate 330. The stretch at asparagine 421 to leucine 647 forms a coiled coil.

This sequence belongs to the LRRCC1 family.

Its subcellular location is the cytoplasm. The protein resides in the cytoskeleton. It is found in the microtubule organizing center. The protein localises to the centrosome. It localises to the centriole. Required for the organization of the mitotic spindle. Maintains the structural integrity of centrosomes during mitosis. The protein is Leucine-rich repeat and coiled-coil domain-containing protein 1 (LRRCC1) of Homo sapiens (Human).